A 571-amino-acid chain; its full sequence is Chaperonin GroEL 1 (571 aa).

Residues Thr-29 to Pro-32, Lys-50, Asp-86 to Thr-90, Gly-416, and Asp-498 each bind ATP.

The protein belongs to the chaperonin (HSP60) family. In terms of assembly, forms a cylinder of 14 subunits composed of two heptameric rings stacked back-to-back. Interacts with the co-chaperonin GroES.

It localises to the cytoplasm. It carries out the reaction ATP + H2O + a folded polypeptide = ADP + phosphate + an unfolded polypeptide.. Functionally, together with its co-chaperonin GroES, plays an essential role in assisting protein folding. The GroEL-GroES system forms a nano-cage that allows encapsulation of the non-native substrate proteins and provides a physical environment optimized to promote and accelerate protein folding. This Rhodopirellula baltica (strain DSM 10527 / NCIMB 13988 / SH1) protein is Chaperonin GroEL 1.